The primary structure comprises 472 residues: 3-isopropylmalate dehydratase large subunit (472 aa).

The [4Fe-4S] cluster site is built by C351, C412, and C415.

This sequence belongs to the aconitase/IPM isomerase family. LeuC type 1 subfamily. Heterodimer of LeuC and LeuD. It depends on [4Fe-4S] cluster as a cofactor.

It carries out the reaction (2R,3S)-3-isopropylmalate = (2S)-2-isopropylmalate. It participates in amino-acid biosynthesis; L-leucine biosynthesis; L-leucine from 3-methyl-2-oxobutanoate: step 2/4. Its function is as follows. Catalyzes the isomerization between 2-isopropylmalate and 3-isopropylmalate, via the formation of 2-isopropylmaleate. This chain is 3-isopropylmalate dehydratase large subunit, found in Marinobacter nauticus (strain ATCC 700491 / DSM 11845 / VT8) (Marinobacter aquaeolei).